A 381-amino-acid polypeptide reads, in one-letter code: Cytochrome b (381 aa).

Helical transmembrane passes span 34 to 54 (FGSL…FLAM), 78 to 99 (WLIR…YLHI), 114 to 134 (WNIG…GYVL), and 179 to 199 (FFAF…LHFL). Residues H84 and H98 each contribute to the heme b site. Heme b is bound by residues H183 and H197. Position 202 (H202) interacts with a ubiquinone. Helical transmembrane passes span 227–247 (YKDI…VLFL), 289–309 (LGGV…PFLH), 321–341 (LTQL…WIGG), and 348–368 (FIFI…IITP).

Belongs to the cytochrome b family. In terms of assembly, the cytochrome bc1 complex contains 3 respiratory subunits (MT-CYB, CYC1 and UQCRFS1), 2 core proteins (UQCRC1 and UQCRC2) and probably 6 low-molecular weight proteins. Heme b serves as cofactor.

It is found in the mitochondrion inner membrane. Functionally, component of the ubiquinol-cytochrome c reductase complex (complex III or cytochrome b-c1 complex) that is part of the mitochondrial respiratory chain. The b-c1 complex mediates electron transfer from ubiquinol to cytochrome c. Contributes to the generation of a proton gradient across the mitochondrial membrane that is then used for ATP synthesis. The polypeptide is Cytochrome b (mt-cyb) (Heterodontus francisci (Horn shark)).